Here is a 486-residue protein sequence, read N- to C-terminus: MSLHEINENVKLAREYALLGNYSSAIVCYRGVLEQIKKYLFTVRDSSFQQKWQQVWQEINEENNQVQEIMRTLESFQLETTPSKPPSNQDGINDIWPVQVERRSSPLPVRRPPVPYKDSKPHNNRLSVAGVRAQHRQSPRGANGDRAKPLKGKEKKEAKPKDDKNKAEVSEKEVKRFDGQGYDKDLIEALERDIISQNPNVKWDDIADLEEAKKLLKEAVVLPMWMPEFFKGIRRPWKGVLMVGPPGTGKTLLAKAVATECRTTFFNVSSSTLTSKYRGESEKLVRILFEMARFYAPTTIFIDEIDSMCSRRGTSEEHEASRRVKAELLVQMDGVGGASDNEDPSKMVMVLAATNFPWDIDEALRRRLEKRIYIPLPSAKGRVELLRINLKELELANDVDMAKIAEQSEGYSGADITNVCRDASLMAMRRRIEGLTPEEIRNISRAEMHMPTTMEDFESSLKKVSKSVSASDLEKYEKWIEEFGSC.

The interval 103–174 is disordered; the sequence is RSSPLPVRRP…NKAEVSEKEV (72 aa). A compositionally biased stretch (basic and acidic residues) spans 143–174; sequence NGDRAKPLKGKEKKEAKPKDDKNKAEVSEKEV. Position 244 to 251 (244 to 251) interacts with ATP; sequence GPPGTGKT.

It belongs to the AAA ATPase family. Katanin p60 subunit A1 subfamily. Can homooligomerize into hexameric rings, which may be promoted by interaction with microtubules. Interacts with katnb1, which may serve as a targeting subunit.

Its subcellular location is the cytoplasm. It localises to the cytoskeleton. The protein localises to the microtubule organizing center. It is found in the centrosome. The protein resides in the spindle pole. Its subcellular location is the spindle. The catalysed reaction is n ATP + n H2O + a microtubule = n ADP + n phosphate + (n+1) alpha/beta tubulin heterodimers.. ATPase activity is stimulated by microtubules, which promote homooligomerization. ATP-dependent microtubule severing is stimulated by interaction with katnb1. In terms of biological role, catalytic subunit of a complex which severs microtubules in an ATP-dependent manner. Microtubule severing may promote rapid reorganization of cellular microtubule arrays and the release of microtubules from the centrosome following nucleation. The protein is Katanin p60 ATPase-containing subunit A1 (katna1) of Salmo salar (Atlantic salmon).